We begin with the raw amino-acid sequence, 319 residues long: Aspartate carbamoyltransferase catalytic subunit (319 aa).

Carbamoyl phosphate-binding residues include Arg65 and Thr66. Lys93 serves as a coordination point for L-aspartate. 3 residues coordinate carbamoyl phosphate: Arg115, His149, and Gln152. Arg182 and Arg237 together coordinate L-aspartate. Gly278 and Pro279 together coordinate carbamoyl phosphate.

This sequence belongs to the aspartate/ornithine carbamoyltransferase superfamily. ATCase family. Heterododecamer (2C3:3R2) of six catalytic PyrB chains organized as two trimers (C3), and six regulatory PyrI chains organized as three dimers (R2).

The catalysed reaction is carbamoyl phosphate + L-aspartate = N-carbamoyl-L-aspartate + phosphate + H(+). Its pathway is pyrimidine metabolism; UMP biosynthesis via de novo pathway; (S)-dihydroorotate from bicarbonate: step 2/3. Catalyzes the condensation of carbamoyl phosphate and aspartate to form carbamoyl aspartate and inorganic phosphate, the committed step in the de novo pyrimidine nucleotide biosynthesis pathway. The sequence is that of Aspartate carbamoyltransferase catalytic subunit from Janthinobacterium sp. (strain Marseille) (Minibacterium massiliensis).